Consider the following 971-residue polypeptide: Breast cancer type 2 susceptibility protein homolog (971 aa).

Positions 1–15 are enriched in polar residues; the sequence is MDQNGASGSHPNRLS. 4 disordered regions span residues 1–30, 130–155, 349–395, and 420–466; these read MDQNGASGSHPNRLSQGRGAHARERGATVS, SRKRDPKSHKAVQNEKRRGSSGLSVQ, KLKL…DQPN, and MQCS…SSHQ. Positions 130-139 are enriched in basic residues; that stretch reads SRKRDPKSHK. Positions 349-364 are enriched in basic and acidic residues; it reads KLKLEPSSQKEQKSSK. 3 stretches are compositionally biased toward polar residues: residues 375-392, 420-432, and 453-466; these read SKQSCDINTKNEGTTILD, MQCSNGPSTSKNA, and KQTPNKSQTISSHQ. BRCA2 repeat units lie at residues 570-604, 671-705, and 746-780; these read AEPEFCGFRTASNKAIPISEKMKIKTAEFMAEFQS, NESQFFGFRTASNKAIEITEAMEKRGAMFLAQSKA, and SETEFFGFRTASNKGIVISENTKIKVAQFMSEFQA. Residues 916–971 are disordered; sequence MERFAPKPSSTSTPLADRDLNRSKDCTKNRQDAEDMSPICMQPKKSRRLGLSRSRY. Residues 931-948 show a composition bias toward basic and acidic residues; sequence ADRDLNRSKDCTKNRQDA. Basic residues predominate over residues 959–971; the sequence is KKSRRLGLSRSRY.

In terms of assembly, interacts with Rad9. Interacts with spn-A/Rad51. Interacts with cyclin CycG.

The protein resides in the nucleus. Its function is as follows. Involved in and required for double-strand break repair by meiotic and mitotic homologous recombination. During meiosis, has a dual role in the repair of meiotic double-stranded breaks and the efficient activation of the meiotic recombination checkpoint. This Drosophila melanogaster (Fruit fly) protein is Breast cancer type 2 susceptibility protein homolog.